Reading from the N-terminus, the 193-residue chain is dCTP deaminase (193 aa).

DCTP is bound by residues 110-115 (RSSLAR), D128, 136-138 (VLE), Y171, K178, and Q182. Residue E138 is the Proton donor/acceptor of the active site. The segment at 168–193 (DRPYNRRQDAKYKNQQGAVSSRIDED) is disordered. A compositionally biased stretch (basic and acidic residues) spans 170–179 (PYNRRQDAKY).

It belongs to the dCTP deaminase family. Homotrimer.

It catalyses the reaction dCTP + H2O + H(+) = dUTP + NH4(+). It functions in the pathway pyrimidine metabolism; dUMP biosynthesis; dUMP from dCTP (dUTP route): step 1/2. Functionally, catalyzes the deamination of dCTP to dUTP. The protein is dCTP deaminase of Photorhabdus laumondii subsp. laumondii (strain DSM 15139 / CIP 105565 / TT01) (Photorhabdus luminescens subsp. laumondii).